An 885-amino-acid chain; its full sequence is Rho GTPase-activating protein gacFF (885 aa).

The segment covering 168–182 (TTTNNSNNSNSNNNN) has biased composition (low complexity). The disordered stretch occupies residues 168-187 (TTTNNSNNSNSNNNNKQYNS). The stretch at 222–249 (LINKIQNDSEQLKLVLSQVEQQIEFLKS) forms a coiled coil. In terms of domain architecture, F-box spans 348 to 394 (SDIFSLLPTHLTLYVFSYLEPKELLILAQVSSQWQKLAGDNLLWVRF). The 108-residue stretch at 464 to 571 (SSSKEGWLYK…WMILLNSIIK (108 aa)) folds into the PH domain. 2 stretches are compositionally biased toward low complexity: residues 594–622 (NNVY…NNNN) and 629–648 (LPPL…SSTG). A disordered region spans residues 594–680 (NNVYINNNNN…GGGSGGNNNF (87 aa)). Residues 701–885 (VALSKILENQ…KYYDEIFIKK (185 aa)) form the Rho-GAP domain.

It is found in the cytoplasm. Functionally, rho GTPase-activating protein involved in the signal transduction pathway. The protein is Rho GTPase-activating protein gacFF (gacFF) of Dictyostelium discoideum (Social amoeba).